Consider the following 423-residue polypeptide: POU domain, class 5, transcription factor 1.3 (423 aa).

A disordered region spans residues Gly-85 to Thr-211. A compositionally biased stretch (basic and acidic residues) spans Pro-94 to Ser-110. Composition is skewed to polar residues over residues Ser-111–Met-120, Pro-156–Asn-173, and Pro-194–Ser-203. The 75-residue stretch at Glu-207–Glu-281 folds into the POU-specific domain. Residues Lys-301–Ser-360 constitute a DNA-binding region (homeobox).

This sequence belongs to the POU transcription factor family. Class-5 subfamily. Interacts with the transcription factors tcf7l1/tcf3 and vegt.

It localises to the nucleus. Transcription factor that binds to the octamer motif (5'-ATTTGCAT-3'). Antagonizes the activity of nodal/activin signaling during gastrulation to suppress mesendoderm formation. Acts maternally to inhibit vegt and beta-catenin-activated gene transcription, probably by forming a transcriptional repression complex on the promoters of target genes. Binds to an octamer motif in interspersed RNA. In Xenopus tropicalis (Western clawed frog), this protein is POU domain, class 5, transcription factor 1.3 (pou5f1.3).